The sequence spans 52 residues: ATP synthase protein 8 (52 aa).

The helical transmembrane segment at 7-23 (MMWFSLFIMFSMTMMLF) threads the bilayer.

This sequence belongs to the ATPase protein 8 family. F-type ATPases have 2 components, CF(1) - the catalytic core - and CF(0) - the membrane proton channel.

It localises to the mitochondrion membrane. Mitochondrial membrane ATP synthase (F(1)F(0) ATP synthase or Complex V) produces ATP from ADP in the presence of a proton gradient across the membrane which is generated by electron transport complexes of the respiratory chain. F-type ATPases consist of two structural domains, F(1) - containing the extramembraneous catalytic core and F(0) - containing the membrane proton channel, linked together by a central stalk and a peripheral stalk. During catalysis, ATP synthesis in the catalytic domain of F(1) is coupled via a rotary mechanism of the central stalk subunits to proton translocation. Part of the complex F(0) domain. Minor subunit located with subunit a in the membrane. The chain is ATP synthase protein 8 (MT-ATP8) from Locusta migratoria (Migratory locust).